A 103-amino-acid chain; its full sequence is Histone H4 (103 aa).

A compositionally biased stretch (gly residues) spans 1–14; the sequence is MSGRGKGGKGLGKG. The disordered stretch occupies residues 1–20; that stretch reads MSGRGKGGKGLGKGGAKRHR. The DNA-binding element occupies 17–21; it reads KRHRK.

This sequence belongs to the histone H4 family. As to quaternary structure, the nucleosome is a histone octamer containing two molecules each of H2A, H2B, H3 and H4 assembled in one H3-H4 heterotetramer and two H2A-H2B heterodimers. The octamer wraps approximately 147 bp of DNA.

Its subcellular location is the nucleus. It localises to the chromosome. Core component of nucleosome. Nucleosomes wrap and compact DNA into chromatin, limiting DNA accessibility to the cellular machineries which require DNA as a template. Histones thereby play a central role in transcription regulation, DNA repair, DNA replication and chromosomal stability. DNA accessibility is regulated via a complex set of post-translational modifications of histones, also called histone code, and nucleosome remodeling. The polypeptide is Histone H4 (H41) (Physarum polycephalum (Slime mold)).